The primary structure comprises 399 residues: MSQYRTFAAADAVEYARQFGGVDNPNSLVDALEVGDGNLNLVFRIFDTAGVSRVIVKQALPWVRCVGESWPLTLDRARLEAEVLIEHGKFCPQHTVNILHYDPLLAVTVMEDLSDHAIWRADLVKGIDWPQAAGQLGDYLAQTLFHTSDFFQHPHQKKADVIRFTNPELCDITEELFFNEPYEVHARNAYPRALEPLAESLREDHELRVAVAGLKHRFYSNAEALLHGDVHSGSIFVAEGSLKVIDAEFGFYGPIGFDIGSALGNLLISYCAAPGLLPPREAADAREKRLNDVRQLWQSFAEGFLALAAEKSRDRALAVPGYASTFLAKIWRDSVGYSGTELIRRTVGMSQVADIKGIQDDAMRVECVRQAITLGRSLILLADHVADIDALIARIRQNG.

Residues asparagine 40, lysine 57, and 111 to 113 contribute to the ATP site; that span reads EDL. Aspartate 229 contributes to the substrate binding site. Position 246–248 (246–248) interacts with ATP; the sequence is DAE. Residue arginine 344 participates in substrate binding.

It belongs to the methylthioribose kinase family. Homodimer.

The catalysed reaction is 5-(methylsulfanyl)-D-ribose + ATP = 5-(methylsulfanyl)-alpha-D-ribose 1-phosphate + ADP + H(+). The protein operates within amino-acid biosynthesis; L-methionine biosynthesis via salvage pathway; S-methyl-5-thio-alpha-D-ribose 1-phosphate from S-methyl-5'-thioadenosine (hydrolase route): step 2/2. In terms of biological role, catalyzes the phosphorylation of methylthioribose into methylthioribose-1-phosphate. The polypeptide is Methylthioribose kinase (Erwinia tasmaniensis (strain DSM 17950 / CFBP 7177 / CIP 109463 / NCPPB 4357 / Et1/99)).